Consider the following 103-residue polypeptide: Large ribosomal subunit protein bL21 (103 aa).

The protein belongs to the bacterial ribosomal protein bL21 family. In terms of assembly, part of the 50S ribosomal subunit. Contacts protein L20.

In terms of biological role, this protein binds to 23S rRNA in the presence of protein L20. This is Large ribosomal subunit protein bL21 from Salmonella paratyphi A (strain ATCC 9150 / SARB42).